Consider the following 36-residue polypeptide: Photosystem I reaction center subunit VIII (36 aa).

A helical transmembrane segment spans residues 8-28 (SFFVPLVCLVFPAIAMAFLFV).

The protein belongs to the PsaI family.

It is found in the plastid. The protein resides in the chloroplast thylakoid membrane. May help in the organization of the PsaL subunit. The chain is Photosystem I reaction center subunit VIII from Chara vulgaris (Common stonewort).